Consider the following 92-residue polypeptide: Small ribosomal subunit protein uS19c (92 aa).

The protein belongs to the universal ribosomal protein uS19 family.

It is found in the plastid. The protein localises to the chloroplast. In terms of biological role, protein S19 forms a complex with S13 that binds strongly to the 16S ribosomal RNA. The protein is Small ribosomal subunit protein uS19c of Pinus koraiensis (Korean pine).